A 194-amino-acid polypeptide reads, in one-letter code: Cyclin-dependent kinase inhibitor 4 (194 aa).

Basic and acidic residues predominate over residues 49 to 58; the sequence is LELRSRRLEK. 2 disordered regions span residues 49 to 70 and 107 to 139; these read LELRSRRLEKLPPPPPPPPRRR and TRETTPCSLIRDPDTISTPGSTTRRSHSSSHCK.

The protein belongs to the CDI family. ICK/KRP subfamily.

This chain is Cyclin-dependent kinase inhibitor 4 (KRP4), found in Oryza sativa subsp. japonica (Rice).